The chain runs to 127 residues: MARVKRAVNAHKKRRVILERAKGYRGQRSRLYRKAKEQLLHSFVYSYGDRRKRKGDFRRLWIQRINAASRANGLTYNRLIQGLKAASIEVDRRMLSELAVNDAAAFAGLVKLAKAALPADTSAPVAN.

It belongs to the bacterial ribosomal protein bL20 family.

Its function is as follows. Binds directly to 23S ribosomal RNA and is necessary for the in vitro assembly process of the 50S ribosomal subunit. It is not involved in the protein synthesizing functions of that subunit. In Renibacterium salmoninarum (strain ATCC 33209 / DSM 20767 / JCM 11484 / NBRC 15589 / NCIMB 2235), this protein is Large ribosomal subunit protein bL20.